The chain runs to 205 residues: MKKELIYKALKLRDMGFPSGDIAEELNISVKTALYLTLNGEDLLKSTESPKEDSEKADIFLEWDSVRASSKRLKHIAKIMCDILGQVEFDGIVGISSGGVPLATLISDEMDKNFSIFVPKKHIHTEKEKTTGFIGQNFSSIVGKDVIIVDDVMTSGNAVKEAIKYLKSISNPKMVVVVMDKSGIDEIDGVPVHHLFRTGIVDIKK.

The protein belongs to the purine/pyrimidine phosphoribosyltransferase family. GfcR subfamily.

This chain is Transcriptional regulator GfcR, found in Methanococcus vannielii (strain ATCC 35089 / DSM 1224 / JCM 13029 / OCM 148 / SB).